Here is a 279-residue protein sequence, read N- to C-terminus: Diaminopimelate epimerase (279 aa).

Positions 11 and 72 each coordinate substrate. C81 (proton donor) is an active-site residue. Residues 82 to 83, N187, and 205 to 206 contribute to the substrate site; these read GN and ER. C215 acts as the Proton acceptor in catalysis. 216–217 contacts substrate; it reads GT.

The protein belongs to the diaminopimelate epimerase family. In terms of assembly, homodimer.

The protein resides in the cytoplasm. The enzyme catalyses (2S,6S)-2,6-diaminopimelate = meso-2,6-diaminopimelate. Its pathway is amino-acid biosynthesis; L-lysine biosynthesis via DAP pathway; DL-2,6-diaminopimelate from LL-2,6-diaminopimelate: step 1/1. In terms of biological role, catalyzes the stereoinversion of LL-2,6-diaminopimelate (L,L-DAP) to meso-diaminopimelate (meso-DAP), a precursor of L-lysine and an essential component of the bacterial peptidoglycan. The chain is Diaminopimelate epimerase from Aquifex aeolicus (strain VF5).